The primary structure comprises 304 residues: MHQDHLLSTTQLSREDIETILDRAAAIEMNPDGWEAQYSGTVLGLCFFEPSTRTRMSFDAAMKRLGGRTIDMGSVDNSSISKGETLADTVRVIAGYADAIVLRHPSEGAAKLAAEFVDIPVINAGDGAGQHPTQTLLDLYTMRENVGLDEITVGIAGDLKYGRTVHSLAAALSNFDVRQHFISPESLQLPRNIRYDLHDSGSQVREHTDIESILPELDVLYVTRIQRERFPDENEYQRVAGQYRVDTDILSHADNNLTVMHPLPRVDEIAPEVDTTEHAAYFEQAHNGVPVRMALLDALIGRAK.

Residues R53 and T54 each contribute to the carbamoyl phosphate site. An L-aspartate-binding site is contributed by K82. Residues R103, H131, and Q134 each coordinate carbamoyl phosphate. Residues R163 and R224 each contribute to the L-aspartate site. Carbamoyl phosphate contacts are provided by L263 and P264.

Belongs to the aspartate/ornithine carbamoyltransferase superfamily. ATCase family. Heterooligomer of catalytic and regulatory chains.

The enzyme catalyses carbamoyl phosphate + L-aspartate = N-carbamoyl-L-aspartate + phosphate + H(+). The protein operates within pyrimidine metabolism; UMP biosynthesis via de novo pathway; (S)-dihydroorotate from bicarbonate: step 2/3. In terms of biological role, catalyzes the condensation of carbamoyl phosphate and aspartate to form carbamoyl aspartate and inorganic phosphate, the committed step in the de novo pyrimidine nucleotide biosynthesis pathway. This is Aspartate carbamoyltransferase catalytic subunit from Haloquadratum walsbyi (strain DSM 16790 / HBSQ001).